A 269-amino-acid chain; its full sequence is Leucinostatins biosynthesis cluster protein T (269 aa).

Positions 1-15 (MHIILTGTGLVGAIA) are cleaved as a signal peptide. A glycan (N-linked (GlcNAc...) asparagine) is linked at Asn-254.

Its function is as follows. Part of the gene cluster that mediates the biosynthesis of the lipopeptide antibiotics leucinostatins that show extensive biological activities, including antimalarial, antiviral, antibacterial, antifungal, and antitumor activities, as well as phytotoxic. The function of lcsT within the leucinostatins biosynthesis has not been identified yet. The polypeptide is Leucinostatins biosynthesis cluster protein T (Purpureocillium lilacinum (Paecilomyces lilacinus)).